The chain runs to 118 residues: Large ribosomal subunit protein uL22 (118 aa).

The protein belongs to the universal ribosomal protein uL22 family. As to quaternary structure, part of the 50S ribosomal subunit.

In terms of biological role, this protein binds specifically to 23S rRNA; its binding is stimulated by other ribosomal proteins, e.g. L4, L17, and L20. It is important during the early stages of 50S assembly. It makes multiple contacts with different domains of the 23S rRNA in the assembled 50S subunit and ribosome. Functionally, the globular domain of the protein is located near the polypeptide exit tunnel on the outside of the subunit, while an extended beta-hairpin is found that lines the wall of the exit tunnel in the center of the 70S ribosome. The sequence is that of Large ribosomal subunit protein uL22 from Synechococcus sp. (strain RCC307).